We begin with the raw amino-acid sequence, 347 residues long: MDKIKALDAALSQIERSFGKGSIMRLGQKEQVVEIETIPTGSLSLDIALGVGGLPKGRIVEIYGPESSGKTTLALHAIAEAQKNGGVCAFIDAEHALDPIYARKLGVDLENLFISQPDTGEQALEITETLVRSGAVDVLVVDSVAALTPRAEIDGEMGDALPGLQARLMSKALRKLTASIFRSNCMVIFINQIRMKIGVMFGSPETTTGGNALKFYASVRLDIRRIGSIKDRDMIVGNQTRVKVVKNKLAPPFKQVEFDIIYGEGISKLGELIDLGVKVGTVEKSGSWFSYNSQRLGQGRENAKQFLREHPEIATEIETALRQNAGLIAIELLENAGSENTESDEVI.

Position 64–71 (64–71 (GPESSGKT)) interacts with ATP.

The protein belongs to the RecA family.

It is found in the cytoplasm. Functionally, can catalyze the hydrolysis of ATP in the presence of single-stranded DNA, the ATP-dependent uptake of single-stranded DNA by duplex DNA, and the ATP-dependent hybridization of homologous single-stranded DNAs. It interacts with LexA causing its activation and leading to its autocatalytic cleavage. This Bartonella henselae (strain ATCC 49882 / DSM 28221 / CCUG 30454 / Houston 1) (Rochalimaea henselae) protein is Protein RecA.